The primary structure comprises 190 residues: Vascular endothelial growth factor A (190 aa).

An N-terminal signal peptide occupies residues 1-26 (MNFLLSWVHWSLALLLYLHHAKWSQA). 3 cysteine pairs are disulfide-bonded: cysteine 51–cysteine 93, cysteine 82–cysteine 127, and cysteine 86–cysteine 129. The N-linked (GlcNAc...) asparagine glycan is linked to asparagine 100.

This sequence belongs to the PDGF/VEGF growth factor family. As to quaternary structure, homodimer; disulfide-linked. Also found as heterodimer with PGF. Interacts with NRP1. Interacts with isoform 2 of BSG. Interacts with CD82; this interaction inhibits VEGFA-mediated signaling pathway.

Its subcellular location is the secreted. In terms of biological role, growth factor active in angiogenesis, vasculogenesis and endothelial cell growth. Induces endothelial cell proliferation, promotes cell migration, inhibits apoptosis and induces permeabilization of blood vessels. Binds to the FLT1/VEGFR1 and KDR/VEGFR2 receptors, heparan sulfate and heparin. Binding to NRP1 receptor initiates a signaling pathway needed for motor neuron axon guidance and cell body migration, including for the caudal migration of facial motor neurons from rhombomere 4 to rhombomere 6 during embryonic development. Also binds the DEAR/FBXW7-AS1 receptor. The sequence is that of Vascular endothelial growth factor A (VEGFA) from Equus caballus (Horse).